The primary structure comprises 427 residues: Septin-8-A (427 aa).

Residues 39–305 (QGFCFNILCV…ELYRRCKLEE (267 aa)) enclose the Septin-type G domain. Residues 49–56 (GETGIGKS) form a G1 motif region. GTP is bound by residues 49 to 56 (GETGIGKS), glycine 104, 185 to 193 (KADTISKSE), glycine 239, and arginine 254. The G3 motif stretch occupies residues 101-104 (DTVG). Residues 184–187 (AKAD) form a G4 motif region. Positions 320-409 (LQETYEAKRK…KAAMEALQSQ (90 aa)) form a coiled coil. The segment covering 376 to 389 (QEESKKVEDKRRDL) has biased composition (basic and acidic residues). Residues 376–427 (QEESKKVEDKRRDLEEEMNSFNRRKAAMEALQSQSFQATSQQPLKKDKDRKN) are disordered. The span at 406–418 (LQSQSFQATSQQP) shows a compositional bias: polar residues.

This sequence belongs to the TRAFAC class TrmE-Era-EngA-EngB-Septin-like GTPase superfamily. Septin GTPase family.

This is Septin-8-A (sept8-a) from Xenopus laevis (African clawed frog).